The sequence spans 306 residues: SPbeta prophage-derived uncharacterized protein YonG (306 aa).

The polypeptide is SPbeta prophage-derived uncharacterized protein YonG (yonG) (Bacillus subtilis (strain 168)).